Here is a 274-residue protein sequence, read N- to C-terminus: NADPH-dependent 7-cyano-7-deazaguanine reductase (274 aa).

80-82 (VES) is a binding site for substrate. 82-83 (SK) contacts NADPH. Residue Cys181 is the Thioimide intermediate of the active site. Catalysis depends on Asp188, which acts as the Proton donor. 220–221 (HE) is a binding site for substrate. Residue 249–250 (RG) participates in NADPH binding.

Belongs to the GTP cyclohydrolase I family. QueF type 2 subfamily. Homodimer.

The protein localises to the cytoplasm. It carries out the reaction 7-aminomethyl-7-carbaguanine + 2 NADP(+) = 7-cyano-7-deazaguanine + 2 NADPH + 3 H(+). It functions in the pathway tRNA modification; tRNA-queuosine biosynthesis. Its function is as follows. Catalyzes the NADPH-dependent reduction of 7-cyano-7-deazaguanine (preQ0) to 7-aminomethyl-7-deazaguanine (preQ1). The chain is NADPH-dependent 7-cyano-7-deazaguanine reductase from Burkholderia multivorans (strain ATCC 17616 / 249).